The primary structure comprises 246 residues: tRNA (guanine-N(1)-)-methyltransferase (246 aa).

Residues Gly-113 and Ile-133–Leu-138 contribute to the S-adenosyl-L-methionine site.

This sequence belongs to the RNA methyltransferase TrmD family. Homodimer.

It localises to the cytoplasm. It catalyses the reaction guanosine(37) in tRNA + S-adenosyl-L-methionine = N(1)-methylguanosine(37) in tRNA + S-adenosyl-L-homocysteine + H(+). In terms of biological role, specifically methylates guanosine-37 in various tRNAs. The polypeptide is tRNA (guanine-N(1)-)-methyltransferase (Haemophilus influenzae (strain PittGG)).